A 315-amino-acid chain; its full sequence is Peroxidase 1 (315 aa).

Residues 1–21 form the signal peptide; that stretch reads MASSSYTSLLVLVALVTAASA. Glutamine 22 carries the pyrrolidone carboxylic acid modification. Intrachain disulfides connect cysteine 32–cysteine 107, cysteine 65–cysteine 70, cysteine 113–cysteine 310, and cysteine 193–cysteine 219. Histidine 63 acts as the Proton acceptor in catalysis. Positions 64, 67, 69, 71, and 73 each coordinate Ca(2+). Proline 155 contacts substrate. Asparagine 158 carries an N-linked (GlcNAc...) asparagine glycan. Histidine 186 serves as a coordination point for heme b. A Ca(2+)-binding site is contributed by threonine 187. Ca(2+) contacts are provided by aspartate 234, threonine 237, and aspartate 242. The N-linked (GlcNAc...) asparagine glycan is linked to asparagine 265.

It belongs to the peroxidase family. Classical plant (class III) peroxidase subfamily. Requires Ca(2+) as cofactor. The cofactor is heme b.

It is found in the secreted. The enzyme catalyses 2 a phenolic donor + H2O2 = 2 a phenolic radical donor + 2 H2O. Removal of H(2)O(2), oxidation of toxic reductants, biosynthesis and degradation of lignin, suberization, auxin catabolism, response to environmental stresses such as wounding, pathogen attack and oxidative stress. These functions might be dependent on each isozyme/isoform in each plant tissue. Functionally, involved in defense response to powdery meldew fungus. The polypeptide is Peroxidase 1 (Hordeum vulgare (Barley)).